Here is a 373-residue protein sequence, read N- to C-terminus: MHNQSPIIRRKSTRIYVGNVPIGDGAPIAVQSMTNTRTTDVEATVNQIKALERVGVDIVRVSVPTMDAAEAFKLIKQQVNVPLVADIHFDYRIALQVAEYGVDCLRINPGNIGNESRIRSVVDCARDKNIPIRIGVNGGSLEKDIQEKYGEPTPEALLESAMRHVDILDRLNFDQFKVSVKASDVFLAVQSYRLLAARIDQPLHLGITEAGGARSGSVKSAIGLGLLLSEGIGDTLRISLAADPVEEVKVGFDILKSLRIRARGINFIACPTCSRQEFDVIGTVNALEQRLEDIITPMDISIIGCVVNGPGEALVSTLGVTGGHKKSGFYEDGVRQKERFDNEQMIDQLEAKIRAKASMMDESNRIAVNLLEK.

[4Fe-4S] cluster-binding residues include cysteine 270, cysteine 273, cysteine 305, and glutamate 312.

The protein belongs to the IspG family. It depends on [4Fe-4S] cluster as a cofactor.

The catalysed reaction is (2E)-4-hydroxy-3-methylbut-2-enyl diphosphate + oxidized [flavodoxin] + H2O + 2 H(+) = 2-C-methyl-D-erythritol 2,4-cyclic diphosphate + reduced [flavodoxin]. It participates in isoprenoid biosynthesis; isopentenyl diphosphate biosynthesis via DXP pathway; isopentenyl diphosphate from 1-deoxy-D-xylulose 5-phosphate: step 5/6. Functionally, converts 2C-methyl-D-erythritol 2,4-cyclodiphosphate (ME-2,4cPP) into 1-hydroxy-2-methyl-2-(E)-butenyl 4-diphosphate. This Serratia proteamaculans (strain 568) protein is 4-hydroxy-3-methylbut-2-en-1-yl diphosphate synthase (flavodoxin).